The following is a 682-amino-acid chain: Potassium-transporting ATPase ATP-binding subunit (682 aa).

4 helical membrane-spanning segments follow: residues 34 to 54 (PVMF…IAMA), 62 to 82 (ALFS…ANFA), 219 to 239 (IALT…TATL), and 254 to 274 (VLVA…LSAI). The active-site 4-aspartylphosphate intermediate is aspartate 307. Residues aspartate 344, glutamate 348, 377–384 (FTAQSRMS), and lysine 395 contribute to the ATP site. The Mg(2+) site is built by aspartate 518 and aspartate 522. The next 3 helical transmembrane spans lie at 588 to 608 (FAII…LNIM), 616 to 636 (AILS…PLAL), and 656 to 676 (IYGL…DLLL).

This sequence belongs to the cation transport ATPase (P-type) (TC 3.A.3) family. Type IA subfamily. In terms of assembly, the system is composed of three essential subunits: KdpA, KdpB and KdpC.

The protein resides in the cell inner membrane. It carries out the reaction K(+)(out) + ATP + H2O = K(+)(in) + ADP + phosphate + H(+). Part of the high-affinity ATP-driven potassium transport (or Kdp) system, which catalyzes the hydrolysis of ATP coupled with the electrogenic transport of potassium into the cytoplasm. This subunit is responsible for energy coupling to the transport system and for the release of the potassium ions to the cytoplasm. The sequence is that of Potassium-transporting ATPase ATP-binding subunit from Escherichia coli O6:K15:H31 (strain 536 / UPEC).